Consider the following 338-residue polypeptide: MAISPKKRALALVVVLIVAGAVAYYFLSRHHAPEKTVTIYGNIDIRQVQAAFDDNGRLLDLRVQEGDRVKKGQLLADLDPVRFQDAVDKDAAVWPRKSRCWRACWRVPVRKKSPRPGPKPAAAQATLSNAEITWQRQQALAARQYVPKQSLDNAAAALKTARANLDRAQQALTLAIKGPRKEDIAAARQQLQADKAGLSLARRELTDTRLYAPEDGVVQDRILEPGDMVSPQTPVFTLALDNPVWVRAYLPEKALGQVRLGMKATISSDSFPGKSFPGWVGFISPTAEFTPKTVQTTELRTELVYRVRVYACNPQHRLRLGMPVTVHIPLTDNQPQKL.

Positions 1 to 23 are cleaved as a signal peptide; it reads MAISPKKRALALVVVLIVAGAVA. Residues 148–207 are a coiled coil; the sequence is KQSLDNAAAALKTARANLDRAQQALTLAIKGPRKEDIAAARQQLQADKAGLSLARRELTD.

It belongs to the UPF0194 family.

Its subcellular location is the periplasm. This Acidithiobacillus ferridurans protein is UPF0194 membrane protein in asrC 5'region.